A 121-amino-acid chain; its full sequence is Large ribosomal subunit protein bL20 (121 aa).

This sequence belongs to the bacterial ribosomal protein bL20 family.

Functionally, binds directly to 23S ribosomal RNA and is necessary for the in vitro assembly process of the 50S ribosomal subunit. It is not involved in the protein synthesizing functions of that subunit. This is Large ribosomal subunit protein bL20 from Methylorubrum extorquens (strain PA1) (Methylobacterium extorquens).